The primary structure comprises 129 residues: Histone H2A (129 aa).

Belongs to the histone H2A family. In terms of assembly, the nucleosome is a histone octamer containing two molecules each of H2A, H2B, H3 and H4 assembled in one H3-H4 heterotetramer and two H2A-H2B heterodimers. The octamer wraps approximately 147 bp of DNA.

It localises to the nucleus. The protein localises to the chromosome. Functionally, core component of nucleosome. Nucleosomes wrap and compact DNA into chromatin, limiting DNA accessibility to the cellular machineries which require DNA as a template. Histones thereby play a central role in transcription regulation, DNA repair, DNA replication and chromosomal stability. DNA accessibility is regulated via a complex set of post-translational modifications of histones, also called histone code, and nucleosome remodeling. This chain is Histone H2A (H2A-II), found in Chlamydomonas reinhardtii (Chlamydomonas smithii).